Consider the following 206-residue polypeptide: Ras-related protein O-RAL (206 aa).

21-28 (GSGGVGKS) contacts GTP. The Effector region motif lies at 43–51 (YEPTKADSY). Residues 68 to 72 (DTAGQ) and 128 to 131 (NKSD) contribute to the GTP site. A compositionally biased stretch (basic and acidic residues) spans 180–189 (KMSENKDKNG). Residues 180-206 (KMSENKDKNGKKSSRNKKSLRERCCIL) form a disordered region. A Cysteine methyl ester modification is found at C203. The S-geranylgeranyl cysteine moiety is linked to residue C203. Positions 204 to 206 (CIL) are cleaved as a propeptide — removed in mature form.

It belongs to the small GTPase superfamily. Ras family.

The protein localises to the cell membrane. It carries out the reaction GTP + H2O = GDP + phosphate + H(+). This chain is Ras-related protein O-RAL, found in Diplobatis ommata (Ocellated electric ray).